The chain runs to 253 residues: MSESSEKTGTTHFGFRQVAAKDKKTLVAEVFTSVSRRYDLMNDLMSLGIHRAWKRYFVATAQVKSGDRVLDLAGGTGDIAMLLKNRVGAEGSIVLGDINASMLSVGRDRLIDRGVVAHLDYVQCNAEALPFQDKCFDLVTMSFGLRNVTDKDTALCEMFRVLKVGGQARVLEFSTVTAEWFKPIYDFHSFQVLPRLGRLFARDAASYRYLAESIRKHPPQEELQAMMGAAGFERCRYRNLTGGIVAIHSGYKY.

Residues Thr-76, Asp-97, 125 to 126 (NA), and Ser-142 contribute to the S-adenosyl-L-methionine site.

Belongs to the class I-like SAM-binding methyltransferase superfamily. MenG/UbiE family.

The enzyme catalyses a 2-demethylmenaquinol + S-adenosyl-L-methionine = a menaquinol + S-adenosyl-L-homocysteine + H(+). It carries out the reaction a 2-methoxy-6-(all-trans-polyprenyl)benzene-1,4-diol + S-adenosyl-L-methionine = a 5-methoxy-2-methyl-3-(all-trans-polyprenyl)benzene-1,4-diol + S-adenosyl-L-homocysteine + H(+). It functions in the pathway quinol/quinone metabolism; menaquinone biosynthesis; menaquinol from 1,4-dihydroxy-2-naphthoate: step 2/2. It participates in cofactor biosynthesis; ubiquinone biosynthesis. In terms of biological role, methyltransferase required for the conversion of demethylmenaquinol (DMKH2) to menaquinol (MKH2) and the conversion of 2-polyprenyl-6-methoxy-1,4-benzoquinol (DDMQH2) to 2-polyprenyl-3-methyl-6-methoxy-1,4-benzoquinol (DMQH2). This is Ubiquinone/menaquinone biosynthesis C-methyltransferase UbiE from Xylella fastidiosa (strain 9a5c).